A 50-amino-acid polypeptide reads, in one-letter code: Large ribosomal subunit protein bL33 (50 aa).

The protein belongs to the bacterial ribosomal protein bL33 family.

The sequence is that of Large ribosomal subunit protein bL33 from Endomicrobium trichonymphae.